A 209-amino-acid polypeptide reads, in one-letter code: MSNVHVIDHPLVQHKLTLMRKKDASTNSFRRLLGELSTLMAYEVTRDMPLQDIQIETPLETMTGKVIDGKKLVLVSILRAGNGFLDGMLNVVPGARIGHIGLYRDPDTLQPVEYYFKMPSEMAERDIIVVDPMLATGNSAAAAVARLKQLQPRSIKFVCLLAAPEGVATLQKAHPDVPIYTAAIDRELNDHGYILPGLGDAGDRIFGTK.

5-phospho-alpha-D-ribose 1-diphosphate contacts are provided by residues arginine 79, arginine 104, and 131 to 139 (DPMLATGNS). Residues isoleucine 194 and 199–201 (GDA) contribute to the uracil site. Aspartate 200 serves as a coordination point for 5-phospho-alpha-D-ribose 1-diphosphate.

This sequence belongs to the UPRTase family. Requires Mg(2+) as cofactor.

The catalysed reaction is UMP + diphosphate = 5-phospho-alpha-D-ribose 1-diphosphate + uracil. It functions in the pathway pyrimidine metabolism; UMP biosynthesis via salvage pathway; UMP from uracil: step 1/1. Its activity is regulated as follows. Allosterically activated by GTP. In terms of biological role, catalyzes the conversion of uracil and 5-phospho-alpha-D-ribose 1-diphosphate (PRPP) to UMP and diphosphate. This Acidovorax ebreus (strain TPSY) (Diaphorobacter sp. (strain TPSY)) protein is Uracil phosphoribosyltransferase.